The following is a 222-amino-acid chain: Nucleoside triphosphate pyrophosphatase (222 aa).

D82 acts as the Proton acceptor in catalysis.

This sequence belongs to the Maf family. A divalent metal cation serves as cofactor.

Its subcellular location is the cytoplasm. It catalyses the reaction a ribonucleoside 5'-triphosphate + H2O = a ribonucleoside 5'-phosphate + diphosphate + H(+). The enzyme catalyses a 2'-deoxyribonucleoside 5'-triphosphate + H2O = a 2'-deoxyribonucleoside 5'-phosphate + diphosphate + H(+). Functionally, nucleoside triphosphate pyrophosphatase. May have a dual role in cell division arrest and in preventing the incorporation of modified nucleotides into cellular nucleic acids. The protein is Nucleoside triphosphate pyrophosphatase of Mycobacterium bovis (strain ATCC BAA-935 / AF2122/97).